The sequence spans 207 residues: Large ribosomal subunit protein bL25 (207 aa).

It belongs to the bacterial ribosomal protein bL25 family. CTC subfamily. In terms of assembly, part of the 50S ribosomal subunit; part of the 5S rRNA/L5/L18/L25 subcomplex. Contacts the 5S rRNA. Binds to the 5S rRNA independently of L5 and L18.

This is one of the proteins that binds to the 5S RNA in the ribosome where it forms part of the central protuberance. The sequence is that of Large ribosomal subunit protein bL25 from Brucella abortus (strain S19).